Consider the following 328-residue polypeptide: dITP/XTP pyrophosphatase (328 aa).

A unknown region spans residues M1 to T129. An NTP pyrophosphatase region spans residues I130 to Q324. Substrate is bound at residue T134–K139. D196 serves as the catalytic Proton acceptor. Residue D196 participates in Mg(2+) binding. Substrate contacts are provided by residues S197, F280 to D283, K303, and H308 to R309.

This sequence belongs to the HAM1 NTPase family. As to quaternary structure, homodimer. It depends on Mg(2+) as a cofactor.

It carries out the reaction XTP + H2O = XMP + diphosphate + H(+). The enzyme catalyses dITP + H2O = dIMP + diphosphate + H(+). The catalysed reaction is ITP + H2O = IMP + diphosphate + H(+). In terms of biological role, pyrophosphatase that catalyzes the hydrolysis of nucleoside triphosphates to their monophosphate derivatives, with a high preference for the non-canonical purine nucleotides XTP (xanthosine triphosphate), dITP (deoxyinosine triphosphate) and ITP. Seems to function as a house-cleaning enzyme that removes non-canonical purine nucleotides from the nucleotide pool, thus preventing their incorporation into DNA/RNA and avoiding chromosomal lesions. The sequence is that of dITP/XTP pyrophosphatase from Streptococcus pyogenes serotype M18 (strain MGAS8232).